A 288-amino-acid polypeptide reads, in one-letter code: Bifunctional protein FolD (288 aa).

Residues 166–168 (GAS) and Ile232 each bind NADP(+).

The protein belongs to the tetrahydrofolate dehydrogenase/cyclohydrolase family. Homodimer.

It catalyses the reaction (6R)-5,10-methylene-5,6,7,8-tetrahydrofolate + NADP(+) = (6R)-5,10-methenyltetrahydrofolate + NADPH. It carries out the reaction (6R)-5,10-methenyltetrahydrofolate + H2O = (6R)-10-formyltetrahydrofolate + H(+). It participates in one-carbon metabolism; tetrahydrofolate interconversion. In terms of biological role, catalyzes the oxidation of 5,10-methylenetetrahydrofolate to 5,10-methenyltetrahydrofolate and then the hydrolysis of 5,10-methenyltetrahydrofolate to 10-formyltetrahydrofolate. This Yersinia pseudotuberculosis serotype O:1b (strain IP 31758) protein is Bifunctional protein FolD.